Consider the following 544-residue polypeptide: Chaperonin GroEL 1 (544 aa).

ATP contacts are provided by residues 29–32, 86–90, G413, 482–484, and D498; these read TLGP, DGTTT, and NVL.

It belongs to the chaperonin (HSP60) family. Forms a cylinder of 14 subunits composed of two heptameric rings stacked back-to-back. Interacts with the co-chaperonin GroES.

Its subcellular location is the cytoplasm. It catalyses the reaction ATP + H2O + a folded polypeptide = ADP + phosphate + an unfolded polypeptide.. Its function is as follows. Together with its co-chaperonin GroES, plays an essential role in assisting protein folding. The GroEL-GroES system forms a nano-cage that allows encapsulation of the non-native substrate proteins and provides a physical environment optimized to promote and accelerate protein folding. This Chloroflexus aurantiacus (strain ATCC 29366 / DSM 635 / J-10-fl) protein is Chaperonin GroEL 1.